A 602-amino-acid polypeptide reads, in one-letter code: MDSSSTKSKISHSRKTNKKSNKKHESNGKQQQQQDVDGGGGCLRSSWICKNASCRANVPKEDSFCKRCSCCVCHNFDENKDPSLWLVCEPEKSDDVEFCGLSCHIECAFREVKVGVIALGNLMKLDGCFCCYSCGKVSQILGCWKKQLVAAKEARRRDGLCYRIDLGYRLLNGTSRFSELHEIVRAAKSMLEDEVGPLDGPTARTDRGIVSRLPVAANVQELCTSAIKKAGELSANAGRDLVPAACRFHFEDIAPKQVTLRLIELPSAVEYDVKGYKLWYFKKGEMPEDDLFVDCSRTERRMVISDLEPCTEYTFRVVSYTEAGIFGHSNAMCFTKSVEILKPVDGKEKRTIDLVGNAQPSDREEKSSISSRFQIGQLGKYVQLAEAQEEGLLEAFYNVDTEKICEPPEEELPPRRPHGFDLNVVSVPDLNEEFTPPDSSGGEDNGVPLNSLAEADGGDHDDNCDDAVSNGRRKNNNDCLVISDGSGDDTGFDFLMTRKRKAISDSNDSENHECDSSSIDDTLEKCVKVIRWLEREGHIKTTFRVRFLTWFSMSSTAQEQSVVSTFVQTLEDDPGSLAGQLVDAFTDVVSTKRPNNGVMTSH.

Residues 1–38 are disordered; the sequence is MDSSSTKSKISHSRKTNKKSNKKHESNGKQQQQQDVDG. Residues 9-22 are compositionally biased toward basic residues; that stretch reads KISHSRKTNKKSNK. The segment at 67 to 137 adopts a PHD-type zinc-finger fold; it reads RCSCCVCHNF…CFCCYSCGKV (71 aa). The short motif at 144 to 151 is the Nuclear localization signal element; the sequence is WKKQLVAA. The 99-residue stretch at 242 to 340 folds into the Fibronectin type-III domain; that stretch reads VPAACRFHFE…AMCFTKSVEI (99 aa). Residues 430-470 are disordered; the sequence is LNEEFTPPDSSGGEDNGVPLNSLAEADGGDHDDNCDDAVSN. Residues 502-602 are VIN3-Interacting Domain (VID); that stretch reads AISDSNDSEN…RPNNGVMTSH (101 aa).

In terms of assembly, interacts with VIN3 and VIL2. The heterodimer made of VIN3 and VIL1 is required for establishing the vernalization-induced epigenetic silencing of FLC. Component of the plant homeodomain / polycomb repressive complex 2 (PHD-PRC2) large complex during prolonged cold, composed of core PRC2 components (VRN2, EZA1, FIE and MSI1), and three related PHD finger proteins (VIL1, VIL2 and VIN3) that mediates histone H3 trimethylation on 'Lys-27' (H3K27me3). Accumulates in shoot and root apices, and in leaves.

The protein resides in the nucleus. Its subcellular location is the nucleus speckle. In terms of biological role, involved in both the vernalization and photoperiod pathways by regulating expression of the related floral repressors FLOWERING LOCUS C (FLC) and FLOWERING LOCUS M (FLM). Together with VIN3, required during vernalization for the modifications of FLC and FLM chromatin that are associated with an epigenetically silenced state (e.g. chromatin modifications, histone deacetylation, and trimethylated H3 'Lys-4' H3K4me3 and 'Lys-27' H3K27me3) and with acquisition of competence to flower. Promotes flowering in short days (SD=8 hours light/16 hours dark). Associates dynamically at FLC locus; during vernalization, binds to specific sites, but when in warm conditions, distributed along the whole locus. This Arabidopsis thaliana (Mouse-ear cress) protein is VIN3-like protein 1 (VIL1).